A 346-amino-acid chain; its full sequence is Glucose-6-phosphatase 3 (346 aa).

At 1–24 (MESTLGAGIAMAEALQNQLPWLEN) the chain is on the lumenal side. A helical transmembrane segment spans residues 25-45 (VWLWVTFLGDPKSLFLFYFPA). The Cytoplasmic portion of the chain corresponds to 46-54 (AYYASRRVG). Residues 55-75 (IAVLWISLITEWLNLVFKWFL) traverse the membrane as a helical segment. The Lumenal segment spans residues 76-108 (FGDRPFWWVHESGYYSQAPAQVHQFPSSCETGP). R79 lines the substrate pocket. A helical membrane pass occupies residues 109–129 (GSPSGHCMITGAALWPIMTAV). H114 (proton donor) is an active-site residue. At 130-140 (SSQMATRAHSR) the chain is on the cytoplasmic side. The helical transmembrane segment at 141–162 (WVRVIPSLAYCTFLLAVGLSRV) threads the bilayer. Residue R161 participates in substrate binding. The Lumenal portion of the chain corresponds to 163–167 (FLLAH). The active-site Nucleophile is the H167. Residues 168–186 (FPHQVLAGLITGAVLGWLM) traverse the membrane as a helical segment. Topologically, residues 187–197 (TPQVPMERELS) are cytoplasmic. A helical membrane pass occupies residues 198–218 (FYGLTSLALLLGASLIYWTLF). The Lumenal segment spans residues 219 to 254 (TLGLDLSWSINLASKWCERPEWVHLDSRPFASLSRD). Residues 255 to 273 (SGAALGLGIALHSPCYAQV) form a helical membrane-spanning segment. Residues 274 to 283 (RRAHLGYGQK) are Cytoplasmic-facing. A helical transmembrane segment spans residues 284 to 304 (LVCLVLAMGLLGPLNWLGYPP). Topologically, residues 305 to 307 (QIS) are lumenal. A helical transmembrane segment spans residues 308–328 (LFYIFNFLKYTLWPCLVLALV). Residues 329 to 346 (PWLVHMFSAQEAPPIRSS) lie on the Cytoplasmic side of the membrane.

Belongs to the glucose-6-phosphatase family.

It localises to the endoplasmic reticulum membrane. The enzyme catalyses D-glucose 6-phosphate + H2O = D-glucose + phosphate. It functions in the pathway carbohydrate biosynthesis; gluconeogenesis. With respect to regulation, inhibited by vanadate. In terms of biological role, hydrolyzes glucose-6-phosphate to glucose in the endoplasmic reticulum. May form with the glucose-6-phosphate transporter (SLC37A4/G6PT) a ubiquitously expressed complex responsible for glucose production through glycogenolysis and gluconeogenesis. Probably required for normal neutrophil function. This Bos taurus (Bovine) protein is Glucose-6-phosphatase 3 (G6PC3).